A 157-amino-acid chain; its full sequence is Oleosin-B1 (157 aa).

The interval Gly2–Thr20 is polar. The interval Ser21–Ala138 is hydrophobic. A run of 3 helical transmembrane segments spans residues Ile22–Thr42, Ala45–Ile65, and Thr72–Tyr92. Tandem repeats lie at residues Pro119–Ala122, Pro123–Ala126, Pro127–Ala130, Pro131–Ala134, Pro135–Ala138, Pro139–Lys142, Pro143–Ala146, Pro147–Lys150, and Pro151–Pro154. The 9 X 4 AA tandem repeats of P-[AR]-[AP]-[AKP] stretch occupies residues Pro119 to Ala122. Positions Ala137 to Leu157 are disordered. A compositionally biased stretch (pro residues) spans Ala138–Leu157.

Belongs to the oleosin family. The full-length protein is found in the tapetal lipid bodies of immature anthers, the proteolytically cleaved C-terminal product is found on the coats of pollen grains. Highest expression is in microspores entering and undergoing mitosis. No expression is observed in male-sterile plants, green tissues or roots.

It localises to the lipid droplet. The protein localises to the membrane. Its function is as follows. Many of the major pollen coat proteins are derived from endoproteolytic cleavage of oleosin-like proteins. The chain is Oleosin-B1 (OlnB1) from Brassica napus (Rape).